Here is a 195-residue protein sequence, read N- to C-terminus: Probable molybdenum cofactor guanylyltransferase (195 aa).

Residues Leu-6 to Gly-8, Lys-18, Asp-67, and Asp-93 each bind GTP. Asp-93 lines the Mg(2+) pocket.

This sequence belongs to the MobA family. Mg(2+) is required as a cofactor.

It is found in the cytoplasm. The catalysed reaction is Mo-molybdopterin + GTP + H(+) = Mo-molybdopterin guanine dinucleotide + diphosphate. Its function is as follows. Transfers a GMP moiety from GTP to Mo-molybdopterin (Mo-MPT) cofactor (Moco or molybdenum cofactor) to form Mo-molybdopterin guanine dinucleotide (Mo-MGD) cofactor. This Thermococcus sibiricus (strain DSM 12597 / MM 739) protein is Probable molybdenum cofactor guanylyltransferase.